The primary structure comprises 142 residues: Putative pre-16S rRNA nuclease (142 aa).

This sequence belongs to the YqgF nuclease family.

The protein resides in the cytoplasm. Its function is as follows. Could be a nuclease involved in processing of the 5'-end of pre-16S rRNA. This chain is Putative pre-16S rRNA nuclease, found in Ruminiclostridium cellulolyticum (strain ATCC 35319 / DSM 5812 / JCM 6584 / H10) (Clostridium cellulolyticum).